Reading from the N-terminus, the 262-residue chain is Hydroxyethylthiazole kinase (262 aa).

A substrate-binding site is contributed by methionine 39. ATP contacts are provided by lysine 115 and threonine 160. Substrate is bound at residue glycine 187.

This sequence belongs to the Thz kinase family. Mg(2+) is required as a cofactor.

It catalyses the reaction 5-(2-hydroxyethyl)-4-methylthiazole + ATP = 4-methyl-5-(2-phosphooxyethyl)-thiazole + ADP + H(+). Its pathway is cofactor biosynthesis; thiamine diphosphate biosynthesis; 4-methyl-5-(2-phosphoethyl)-thiazole from 5-(2-hydroxyethyl)-4-methylthiazole: step 1/1. Catalyzes the phosphorylation of the hydroxyl group of 4-methyl-5-beta-hydroxyethylthiazole (THZ). The protein is Hydroxyethylthiazole kinase of Staphylococcus epidermidis (strain ATCC 12228 / FDA PCI 1200).